The following is a 250-amino-acid chain: Acetoacetate decarboxylase 1 (250 aa).

Lys-120 acts as the Schiff-base intermediate with acetoacetate in catalysis.

This sequence belongs to the ADC family.

It catalyses the reaction acetoacetate + H(+) = acetone + CO2. Catalyzes the conversion of acetoacetate to acetone and carbon dioxide. This Bradyrhizobium diazoefficiens (strain JCM 10833 / BCRC 13528 / IAM 13628 / NBRC 14792 / USDA 110) protein is Acetoacetate decarboxylase 1.